The primary structure comprises 717 residues: Homeobox protein araucan (717 aa).

Disordered regions lie at residues 46–80 (APAM…PNAL), 94–130 (GGSS…GGGG), 317–371 (NKMT…AIDE), 395–418 (SGGY…YHHQ), 478–516 (TPPP…AGRD), 549–615 (TNNS…ASQR), and 675–717 (ARLG…KFTN). Positions 94-103 (GGSSAGGGGP) are enriched in gly residues. Positions 255 to 317 (LAARRKNATR…NARRRLKKEN (63 aa)) form a DNA-binding region, homeobox; TALE-type. The span at 317 to 327 (NKMTWEPKNRT) shows a compositional bias: basic and acidic residues. A Phosphoserine modification is found at S336. Residues 337-347 (DDEKDKEDLEP) are compositionally biased toward basic and acidic residues. Positions 395-410 (SGGYPGGGGSSSGHPG) are enriched in gly residues. 4 stretches are compositionally biased toward low complexity: residues 492-507 (QQQQ…AQHQ), 559-589 (PPQQ…GPII), 599-614 (QQQQ…TASQ), and 687-698 (SSGNSSSSSSSS).

This sequence belongs to the TALE/IRO homeobox family.

It is found in the nucleus. In terms of biological role, controls proneural and vein forming genes. Positive transcriptional controller of AC-SC (achaete-scute). May act as an activator that interacts with the transcriptional complex assembled on the AC and SC promoters and participates in transcription initiation. In Drosophila melanogaster (Fruit fly), this protein is Homeobox protein araucan (ara).